Consider the following 489-residue polypeptide: MGSQIIHNSQKPHVVCVPYPAQGHINPMMRVAKLLHARGFYVTFVNTVYNHNRFLRSRGSNALDGLPSFRFESIADGLPETDMDATQDITALCESTMKNCLAPFRELLQRINAGDNVPPVSCIVSDGCMSFTLDVAEELGVPEVLFWTTSGCAFLAYLHFYLFIEKGLCPLKDESYLTKEYLEDTVIDFIPTMKNVKLKDIPSFIRTTNPDDVMISFALRETERAKRASAIILNTFDDLEHDVVHAMQSILPPVYSVGPLHLLANREIEEGSEIGMMSSNLWKEEMECLDWLDTKTQNSVIYINFGSITVLSVKQLVEFAWGLAGSGKEFLWVIRPDLVAGEEAMVPPDFLMETKDRSMLASWCPQEKVLSHPAIGGFLTHCGWNSILESLSCGVPMVCWPFFADQQMNCKFCCDEWDVGIEIGGDVKREEVEAVVRELMDGEKGKKMREKAVEWQRLAEKATEHKLGSSVMNFETVVSKFLLGQKSQD.

UDP-alpha-D-glucose is bound by residues S307, C364–Q366, H381–E389, and F403–Q406.

Belongs to the UDP-glycosyltransferase family. In terms of tissue distribution, expressed in root tips, lateral root initials, root apex, shoots, leaf periphery, leaf primordia and flowers.

Involved in the O-glucosylation of trans-zeatin and dihydrozeatin. Also active in vitro on cis-zeatin. Not active on N-glucosylated substrates. The polypeptide is UDP-glycosyltransferase 85A1 (UGT85A1) (Arabidopsis thaliana (Mouse-ear cress)).